The chain runs to 233 residues: Orotidine 5'-phosphate decarboxylase (233 aa).

Substrate-binding positions include Asp-13, Lys-35, Asp-62–Thr-71, Thr-122, Arg-182, Gln-191, Gly-211, and Arg-212. Lys-64 functions as the Proton donor in the catalytic mechanism.

The protein belongs to the OMP decarboxylase family. Type 1 subfamily. Homodimer.

It catalyses the reaction orotidine 5'-phosphate + H(+) = UMP + CO2. The protein operates within pyrimidine metabolism; UMP biosynthesis via de novo pathway; UMP from orotate: step 2/2. Its function is as follows. Catalyzes the decarboxylation of orotidine 5'-monophosphate (OMP) to uridine 5'-monophosphate (UMP). The protein is Orotidine 5'-phosphate decarboxylase of Pseudomonas putida (strain W619).